A 229-amino-acid chain; its full sequence is Uridylate kinase (229 aa).

Residue 11 to 12 (GS) participates in ATP binding. Position 45 (glycine 45) interacts with UMP. Glycine 46 and arginine 50 together coordinate ATP. UMP-binding positions include aspartate 67 and 114–120 (TEPGHTT). Threonine 140, tyrosine 146, and aspartate 149 together coordinate ATP.

Belongs to the UMP kinase family. As to quaternary structure, homohexamer.

Its subcellular location is the cytoplasm. The catalysed reaction is UMP + ATP = UDP + ADP. It functions in the pathway pyrimidine metabolism; CTP biosynthesis via de novo pathway; UDP from UMP (UMPK route): step 1/1. With respect to regulation, inhibited by UTP. Catalyzes the reversible phosphorylation of UMP to UDP. The chain is Uridylate kinase from Thermoplasma acidophilum (strain ATCC 25905 / DSM 1728 / JCM 9062 / NBRC 15155 / AMRC-C165).